Here is a 231-residue protein sequence, read N- to C-terminus: Acyl-protein thioesterase 2 (231 aa).

Cys2 carries the S-palmitoyl cysteine lipid modification. Ser82 carries the phosphoserine modification. Active-site charge relay system residues include Ser122, Asp176, and His210.

This sequence belongs to the AB hydrolase superfamily. AB hydrolase 2 family. Ubiquitous; detected at low levels.

Its subcellular location is the cytoplasm. The enzyme catalyses S-hexadecanoyl-L-cysteinyl-[protein] + H2O = L-cysteinyl-[protein] + hexadecanoate + H(+). It carries out the reaction prostaglandin E2 1-glyceryl ester + H2O = prostaglandin E2 + glycerol + H(+). It catalyses the reaction 1-hexadecanoyl-sn-glycero-3-phosphocholine + H2O = sn-glycerol 3-phosphocholine + hexadecanoate + H(+). The catalysed reaction is 1-octadecanoyl-sn-glycero-3-phosphocholine + H2O = octadecanoate + sn-glycerol 3-phosphocholine + H(+). The enzyme catalyses 1-hexadecanoyl-sn-glycero-3-phosphate + H2O = sn-glycerol 3-phosphate + hexadecanoate + H(+). It carries out the reaction 1-hexadecanoyl-sn-glycero-3-phospho-L-serine + H2O = sn-glycero-3-phospho-L-serine + hexadecanoate + H(+). Acts as an acyl-protein thioesterase hydrolyzing fatty acids from S-acylated cysteine residues in proteins such as trimeric G alpha proteins, GSDMD, GAP43, ZDHHC6 or HRAS. Deacylates GAP43. Mediates depalmitoylation of ZDHHC6. Has lysophospholipase activity. Hydrolyzes prostaglandin glycerol esters (PG-Gs). Hydrolyzes PG-Gs in the following order prostaglandin D2-glycerol ester (PGD2-G) &gt; prostaglandin E2 glycerol ester (PGE2-G) &gt; prostaglandin F2-alpha-glycerol ester (PGF2-alpha-G). Hydrolyzes 1-arachidonoylglycerol but not 2-arachidonoylglycerol or arachidonoylethanolamide. The sequence is that of Acyl-protein thioesterase 2 (Lypla2) from Mus musculus (Mouse).